Here is a 252-residue protein sequence, read N- to C-terminus: NAD(P)H-quinone oxidoreductase subunit K (252 aa).

Positions 73, 74, 138, and 169 each coordinate [4Fe-4S] cluster. Residues 225-236 (ASTQKQALSPSQ) show a composition bias toward polar residues. The interval 225–252 (ASTQKQALSPSQEIPLEDQNEATKEIAQ) is disordered.

The protein belongs to the complex I 20 kDa subunit family. In terms of assembly, NDH-1 can be composed of about 15 different subunits; different subcomplexes with different compositions have been identified which probably have different functions. [4Fe-4S] cluster is required as a cofactor.

It localises to the cellular thylakoid membrane. It catalyses the reaction a plastoquinone + NADH + (n+1) H(+)(in) = a plastoquinol + NAD(+) + n H(+)(out). The catalysed reaction is a plastoquinone + NADPH + (n+1) H(+)(in) = a plastoquinol + NADP(+) + n H(+)(out). Functionally, NDH-1 shuttles electrons from an unknown electron donor, via FMN and iron-sulfur (Fe-S) centers, to quinones in the respiratory and/or the photosynthetic chain. The immediate electron acceptor for the enzyme in this species is believed to be plastoquinone. Couples the redox reaction to proton translocation, and thus conserves the redox energy in a proton gradient. Cyanobacterial NDH-1 also plays a role in inorganic carbon-concentration. This Prochlorococcus marinus (strain MIT 9211) protein is NAD(P)H-quinone oxidoreductase subunit K.